Reading from the N-terminus, the 150-residue chain is Ribonuclease H (150 aa).

Residues 1–141 (MKFIEVHTDG…VDVLARNQAI (141 aa)) form the RNase H type-1 domain. Mg(2+) is bound by residues Asp9, Glu47, Asp69, and Asp133.

This sequence belongs to the RNase H family. Monomer. Mg(2+) is required as a cofactor.

It is found in the cytoplasm. The catalysed reaction is Endonucleolytic cleavage to 5'-phosphomonoester.. In terms of biological role, endonuclease that specifically degrades the RNA of RNA-DNA hybrids. This Xanthomonas euvesicatoria pv. vesicatoria (strain 85-10) (Xanthomonas campestris pv. vesicatoria) protein is Ribonuclease H.